A 595-amino-acid polypeptide reads, in one-letter code: uncharacterized protein (595 aa).

Positions 1–23 (MLSLSSPPWLLLLVLFFFANGSA) are cleaved as a signal peptide. N-linked (GlcNAc...) asparagine glycosylation is found at asparagine 31, asparagine 63, asparagine 88, asparagine 112, asparagine 144, asparagine 187, asparagine 205, asparagine 389, asparagine 480, asparagine 492, and asparagine 506. The span at 61–83 (LENQTASSSNLNTNNEASDEQTG) shows a compositional bias: polar residues. Disordered regions lie at residues 61-119 (LENQ…VSSL) and 141-164 (TALNGSGTPPEHQTIGQAPPTKGE). A compositionally biased stretch (low complexity) spans 84 to 119 (NSNSNTSSHSRNINGLPSSNSNIDNANSNSSSVSSL).

It localises to the secreted. This is an uncharacterized protein from Drosophila melanogaster (Fruit fly).